Here is a 344-residue protein sequence, read N- to C-terminus: MKPKLLFEQLLSRQDLSSDQMQEVIHACMTGEFSDVQIATFLALMRMKGETVNELTAAAQVMRQLAHKIDLGNPLIDIVGTGGDGRNTFNVSTACSFVVAAAGIKVAKHGNRSVSSRSGSADLLEQAGFILNLSDSQVQNCINQCQLAFLFAPHYHPAMQHARAARQQLGIRTLFNLLGPLINPAQVKRQVVGVFSTNWLKTIATVLANLGSERSLVISSQDGLDEISIAAKSEVVEYRDGNFKQWFISPEDYGLKHSSLDAIIVDSPEQSLHLIQSVLSGDSGPARDIVLLNSAAAIYCAKDGISFDAAIEEARIAIDSGKANLCFNKLRLLTQTLNKESNHE.

5-phospho-alpha-D-ribose 1-diphosphate is bound by residues glycine 80, 83–84 (GD), threonine 88, 90–93 (NVST), 108–116 (KHGNRSVSS), and serine 120. Anthranilate is bound at residue glycine 80. Serine 92 contacts Mg(2+). Asparagine 111 serves as a coordination point for anthranilate. Arginine 166 contributes to the anthranilate binding site. Mg(2+) is bound by residues aspartate 225 and glutamate 226.

Belongs to the anthranilate phosphoribosyltransferase family. As to quaternary structure, homodimer. It depends on Mg(2+) as a cofactor.

It catalyses the reaction N-(5-phospho-beta-D-ribosyl)anthranilate + diphosphate = 5-phospho-alpha-D-ribose 1-diphosphate + anthranilate. The protein operates within amino-acid biosynthesis; L-tryptophan biosynthesis; L-tryptophan from chorismate: step 2/5. Its function is as follows. Catalyzes the transfer of the phosphoribosyl group of 5-phosphorylribose-1-pyrophosphate (PRPP) to anthranilate to yield N-(5'-phosphoribosyl)-anthranilate (PRA). The polypeptide is Anthranilate phosphoribosyltransferase (Legionella pneumophila (strain Paris)).